We begin with the raw amino-acid sequence, 355 residues long: Histidinol-phosphate aminotransferase (355 aa).

Lys211 bears the N6-(pyridoxal phosphate)lysine mark.

It belongs to the class-II pyridoxal-phosphate-dependent aminotransferase family. Histidinol-phosphate aminotransferase subfamily. As to quaternary structure, homodimer. Pyridoxal 5'-phosphate serves as cofactor.

The enzyme catalyses L-histidinol phosphate + 2-oxoglutarate = 3-(imidazol-4-yl)-2-oxopropyl phosphate + L-glutamate. The protein operates within amino-acid biosynthesis; L-histidine biosynthesis; L-histidine from 5-phospho-alpha-D-ribose 1-diphosphate: step 7/9. In Aeromonas salmonicida (strain A449), this protein is Histidinol-phosphate aminotransferase.